The sequence spans 135 residues: Small ribosomal subunit protein bS6 (135 aa).

Positions 98–135 (EASPMAKAKDERDARRAAISERSSEADEVEENAEESAE) are disordered. Residues 104-122 (KAKDERDARRAAISERSSE) show a composition bias toward basic and acidic residues. Over residues 123–135 (ADEVEENAEESAE) the composition is skewed to acidic residues.

It belongs to the bacterial ribosomal protein bS6 family.

Binds together with bS18 to 16S ribosomal RNA. This chain is Small ribosomal subunit protein bS6, found in Shewanella amazonensis (strain ATCC BAA-1098 / SB2B).